A 134-amino-acid polypeptide reads, in one-letter code: MENKKTIYFLCTGNSCRSQMAEAWGKQYLGDKWNVYSAGIEAHGVNPNAIKAMNEVNIDITNQTSDMIDINILNNADLVVTLCSHADSVCPSTPPHVNRVHWGFDDPAGKEWSEFQRVRDEIRERIKRFSEIGE.

Active-site nucleophile residues include Cys11, Cys83, and Cys90. 2 cysteine pairs are disulfide-bonded: Cys11–Cys83 and Cys83–Cys90.

Belongs to the low molecular weight phosphotyrosine protein phosphatase family. Thioredoxin-coupled ArsC subfamily.

The protein resides in the cytoplasm. It carries out the reaction arsenate + [thioredoxin]-dithiol + H(+) = arsenite + [thioredoxin]-disulfide + H2O. Its function is as follows. Catalyzes the reduction of arsenate [As(V)] to arsenite [As(III)]. In Bacillus cereus (strain 03BB102), this protein is Arsenate reductase.